Reading from the N-terminus, the 341-residue chain is Annexin A1 isoform p35 (341 aa).

Annexin repeat units follow at residues 37-108 (FDPS…ALLK), 109-180 (TPAQ…SLAK), 192-263 (ELAE…ALVK), and 267-338 (SKPA…ALCG).

This sequence belongs to the annexin family. Post-translationally, in contrast to mammalian homologs, does not contain a tyrosine phosphorylation site in the N-terminal part.

It is found in the nucleus. It localises to the cytoplasm. The protein localises to the cell projection. The protein resides in the cilium. Its subcellular location is the basolateral cell membrane. Its function is as follows. Calcium/phospholipid-binding protein which promotes membrane fusion and is involved in exocytosis. This protein regulates phospholipase A2 activity. It seems to bind from two to four calcium ions with high affinity. The protein is Annexin A1 isoform p35 (CP35) of Columba livia (Rock dove).